Reading from the N-terminus, the 237-residue chain is Phosphoribosylaminoimidazole-succinocarboxamide synthase (237 aa).

This sequence belongs to the SAICAR synthetase family.

The enzyme catalyses 5-amino-1-(5-phospho-D-ribosyl)imidazole-4-carboxylate + L-aspartate + ATP = (2S)-2-[5-amino-1-(5-phospho-beta-D-ribosyl)imidazole-4-carboxamido]succinate + ADP + phosphate + 2 H(+). Its pathway is purine metabolism; IMP biosynthesis via de novo pathway; 5-amino-1-(5-phospho-D-ribosyl)imidazole-4-carboxamide from 5-amino-1-(5-phospho-D-ribosyl)imidazole-4-carboxylate: step 1/2. The sequence is that of Phosphoribosylaminoimidazole-succinocarboxamide synthase from Edwardsiella ictaluri (strain 93-146).